A 234-amino-acid polypeptide reads, in one-letter code: Ras-related protein Rab-20 (234 aa).

The GTP site is built by glycine 17, lysine 18, threonine 19, aspartate 32, and threonine 36. Mg(2+) is bound at residue threonine 19. 2 short sequence motifs (switch) span residues 28-41 and 55-72; these read RRFP…GGAF and DTAG…YCRG. The Mg(2+) site is built by threonine 36 and aspartate 55. Positions 58, 113, 114, and 116 each coordinate GTP. The disordered stretch occupies residues 125 to 144; sequence GQEKEECSPNMDAGDRVSPR. Residues 126–142 are compositionally biased toward basic and acidic residues; sequence QEKEECSPNMDAGDRVS. 2 residues coordinate GTP: alanine 184 and lysine 185. The segment at 212 to 234 is disordered; sequence RPSHTVDISSHKPPKRTRSGCCA. The span at 223–234 shows a compositional bias: basic residues; that stretch reads KPPKRTRSGCCA. Residues cysteine 232 and cysteine 233 are each lipidated (S-geranylgeranyl cysteine).

It belongs to the small GTPase superfamily. Rab family. The cofactor is Mg(2+). Low or absent expression in normal pancreas and stronger expression in 15 of 18 exocrine pancreatic adenocarcinomas (at protein level).

Its subcellular location is the golgi apparatus. It is found in the cytoplasmic vesicle. The protein resides in the phagosome. It localises to the phagosome membrane. The enzyme catalyses GTP + H2O = GDP + phosphate + H(+). Its activity is regulated as follows. Regulated by guanine nucleotide exchange factors (GEFs) which promote the exchange of bound GDP for free GTP. Regulated by GTPase activating proteins (GAPs) which increase the GTP hydrolysis activity. Inhibited by GDP dissociation inhibitors (GDIs). Functionally, the small GTPases Rab are key regulators of intracellular membrane trafficking, from the formation of transport vesicles to their fusion with membranes. Rabs cycle between an inactive GDP-bound form and an active GTP-bound form that is able to recruit to membranes different sets of downstream effectors directly responsible for vesicle formation, movement, tethering and fusion. RAB20 plays a role in apical endocytosis/recycling. Plays a role in the maturation and acidification of phagosomes that engulf pathogens, such as S.aureus and M.tuberculosis. Plays a role in the fusion of phagosomes with lysosomes. In Homo sapiens (Human), this protein is Ras-related protein Rab-20.